Here is a 112-residue protein sequence, read N- to C-terminus: MYB-like transcription factor ETC2 (112 aa).

Residues 41 to 78 enclose the Myb-like domain; sequence TEQEEDLISRMYRLVGNRWDLIAGRVVGRKANEIERYW.

Interacts with GL3. In terms of tissue distribution, expressed in stomatal guard mother cells, young stomata and trichomes of young leaves, and inflorescences.

It localises to the nucleus. Functionally, MYB-type transcription factor involved in epidermal cell fate specification. Acts as a negative regulator of trichome development, by mediating lateral inhibition. Promotes the formation of hair developing cells in H position in root epidermis, probably by inhibiting non-hair cell formation. The sequence is that of MYB-like transcription factor ETC2 (ETC2) from Arabidopsis thaliana (Mouse-ear cress).